The sequence spans 252 residues: 5'-nucleotidase SurE (252 aa).

4 residues coordinate a divalent metal cation: D8, D9, S39, and N91.

Belongs to the SurE nucleotidase family. Requires a divalent metal cation as cofactor.

It localises to the cytoplasm. The enzyme catalyses a ribonucleoside 5'-phosphate + H2O = a ribonucleoside + phosphate. Its function is as follows. Nucleotidase that shows phosphatase activity on nucleoside 5'-monophosphates. The protein is 5'-nucleotidase SurE of Legionella pneumophila (strain Paris).